The sequence spans 116 residues: MAKSSATKDAQALFHSLRSAYAATPTNLKIIDLYVIFAISTALIQVVYMAIVGSFPFNSFLSGVLSCIGTAVLAVCLRIQVNKENKEFKDLPPERAFADFVLCNLVLHLVIMNFLG.

Topologically, residues 1–32 (MAKSSATKDAQALFHSLRSAYAATPTNLKIID) are cytoplasmic. A helical membrane pass occupies residues 33-53 (LYVIFAISTALIQVVYMAIVG). Residues 54–56 (SFP) lie on the Lumenal side of the membrane. Residues 57–77 (FNSFLSGVLSCIGTAVLAVCL) form a helical membrane-spanning segment. At 78 to 95 (RIQVNKENKEFKDLPPER) the chain is on the cytoplasmic side. A helical membrane pass occupies residues 96–116 (AFADFVLCNLVLHLVIMNFLG).

The protein belongs to the DAD/OST2 family. In terms of assembly, component of the oligosaccharyltransferase (OST) complex.

Its subcellular location is the endoplasmic reticulum membrane. The protein operates within protein modification; protein glycosylation. Its function is as follows. Subunit of the oligosaccharyl transferase (OST) complex that catalyzes the initial transfer of a defined glycan (Glc(3)Man(9)GlcNAc(2) in eukaryotes) from the lipid carrier dolichol-pyrophosphate to an asparagine residue within an Asn-X-Ser/Thr consensus motif in nascent polypeptide chains, the first step in protein N-glycosylation. N-glycosylation occurs cotranslationally and the complex associates with the Sec61 complex at the channel-forming translocon complex that mediates protein translocation across the endoplasmic reticulum (ER). All subunits are required for a maximal enzyme activity. The chain is Dolichyl-diphosphooligosaccharide--protein glycosyltransferase subunit DAD1 (DAD1) from Solanum lycopersicum (Tomato).